The primary structure comprises 92 residues: Phospholemman (92 aa).

The N-terminal stretch at 1 to 20 is a signal peptide; it reads MAPLHHILVLCVGFLTTATA. Topologically, residues 21 to 35 are extracellular; that stretch reads EAPQEHDPFTYDYQS. Residues 36 to 56 form a helical membrane-spanning segment; it reads LRIGGLIIAGILFILGILIVL. At 57 to 92 the chain is on the cytoplasmic side; it reads SRRCRCKFNQQQRTGEPDEEEGTFRSSIRRLSTRRR. Cysteine 60 is lipidated: S-palmitoyl cysteine. Cysteine 62 carries the S-glutathionyl cysteine; alternate modification. Cysteine 62 carries the S-palmitoyl cysteine; alternate lipid modification. The disordered stretch occupies residues 65 to 92; that stretch reads NQQQRTGEPDEEEGTFRSSIRRLSTRRR. Threonine 79 carries the phosphothreonine modification. Residue serine 82 is modified to Phosphoserine. Serine 83 and serine 88 each carry phosphoserine; by PKA and PKC. The segment covering 83–92 has biased composition (basic residues); the sequence is SIRRLSTRRR. Threonine 89 is modified (phosphothreonine; by PKC).

The protein belongs to the FXYD family. As to quaternary structure, homotetramer. Monomer. Regulatory subunit of the sodium/potassium-transporting ATPase (NKA) which is composed of a catalytic alpha subunit, a non-catalytic beta subunit and an additional regulatory subunit. The monomeric form associates with NKA while the oligomeric form does not. Interacts with the catalytic alpha-1 subunit ATP1A1. Also interacts with the catalytic alpha-2 and alpha-3 subunits ATP1A2 and ATP1A3. Very little interaction with the alpha subunits ATP1A1, ATP1A2 or ATP1A3 when phosphorylated at Ser-83. Interacts with non-catalytic beta-1 subunit ATP1B1. Oxidative stress decreases interaction with ATP1A1 but increases interaction with ATP1B1. In terms of processing, major plasma membrane substrate for cAMP-dependent protein kinase (PKA) and protein kinase C (PKC) in several different tissues. Phosphorylated in response to insulin and adrenergic stimulation. Phosphorylation at Ser-88 stimulates sodium/potassium-transporting ATPase activity while the unphosphorylated form inhibits sodium/potassium-transporting ATPase activity. Phosphorylation increases tetramerization, decreases binding to ATP1A1 and reduces inhibition of ATP1A1 activity. Phosphorylation at Ser-83 leads to greatly reduced interaction with ATP1A1, ATP1A2 and ATP1A3. May be phosphorylated by DMPK. Post-translationally, palmitoylation increases half-life and stability and is enhanced upon phosphorylation at Ser-88 by PKA. As to expression, present in heart, esophagus, stomach, aorta, skeletal muscle, smooth muscle, and liver but absent from brain and kidney.

The protein localises to the cell membrane. It localises to the sarcolemma. Its subcellular location is the apical cell membrane. The protein resides in the membrane. It is found in the caveola. The protein localises to the T-tubule. Associates with and regulates the activity of the sodium/potassium-transporting ATPase (NKA) which transports Na(+) out of the cell and K(+) into the cell. Inhibits NKA activity in its unphosphorylated state and stimulates activity when phosphorylated. Reduces glutathionylation of the NKA beta-1 subunit ATP1B1, thus reversing glutathionylation-mediated inhibition of ATP1B1. Contributes to female sexual development by maintaining the excitability of neurons which secrete gonadotropin-releasing hormone. This Canis lupus familiaris (Dog) protein is Phospholemman.